The chain runs to 1832 residues: COPII coat assembly protein sec16 (1832 aa).

Disordered regions lie at residues methionine 1–glutamine 163, glycine 183–glutamate 209, leucine 240–glutamate 269, glutamine 345–proline 863, proline 1420–proline 1482, glutamate 1509–glutamate 1679, and valine 1692–lysine 1832. Over residues glutamate 57 to glutamine 74 the composition is skewed to polar residues. Residues serine 91–glutamate 118 show a composition bias toward basic and acidic residues. Residues asparagine 123 to isoleucine 133 are compositionally biased toward polar residues. Residues leucine 137–glutamate 151 show a composition bias toward basic and acidic residues. Acidic residues-rich tracts occupy residues glutamine 257–glutamate 269, leucine 348–aspartate 361, and glutamate 369–threonine 383. Residues valine 422–serine 457 are compositionally biased toward polar residues. Over residues serine 471–tyrosine 480 the composition is skewed to basic and acidic residues. Over residues valine 510–proline 524 the composition is skewed to pro residues. 2 stretches are compositionally biased toward polar residues: residues serine 528–glutamine 546 and asparagine 590–isoleucine 603. The segment covering asparagine 622 to serine 636 has biased composition (low complexity). Over residues lysine 653 to proline 665 the composition is skewed to pro residues. Residues tyrosine 679–glycine 688 are compositionally biased toward polar residues. Residues tyrosine 705–proline 721 show a composition bias toward basic and acidic residues. Residues serine 738–lysine 747 show a composition bias toward polar residues. The span at proline 814–arginine 829 shows a compositional bias: low complexity. 4 stretches are compositionally biased toward polar residues: residues histidine 845–valine 854, glutamine 1428–proline 1439, serine 1513–tyrosine 1538, and glutamine 1550–aspartate 1559. 2 stretches are compositionally biased toward basic and acidic residues: residues glutamate 1594–methionine 1603 and lysine 1620–lysine 1644. Residues glycine 1725–threonine 1736 are compositionally biased toward pro residues. Positions glycine 1737–serine 1756 are enriched in low complexity. A compositionally biased stretch (pro residues) spans proline 1757–isoleucine 1769.

The protein belongs to the SEC16 family.

Its subcellular location is the endoplasmic reticulum membrane. Functionally, involved in the initiation of assembly of the COPII coat required for the formation of transport vesicles from the endoplasmic reticulum (ER) and the selection of cargo molecules. Also involved in autophagy. The polypeptide is COPII coat assembly protein sec16 (sec16) (Aspergillus fumigatus (strain ATCC MYA-4609 / CBS 101355 / FGSC A1100 / Af293) (Neosartorya fumigata)).